The primary structure comprises 214 residues: MIKSTLIYREDGLPLCTSVDNENDPSLFEQKQKVKIVVSRLTPQSATEATLESGSFEIHYLKKSMVYYFVICESGYPRNLAFSYLNDIAQEFEHSFANEYPKPTVRPYQFVNFDNFLQMTKKSYSDKKVQDNLDQLNQELVGVKQIMSKNIEDLLYRGDSLDKMSDMSSSLKETSKRYRKSAQKINFDLLISQYAPIVIVAFFFVFLFWWIFLK.

Residues 1–192 (MIKSTLIYRE…QKINFDLLIS (192 aa)) lie on the Cytoplasmic side of the membrane. Positions 6–117 (LIYREDGLPL…YQFVNFDNFL (112 aa)) constitute a Longin domain. The region spanning 132-192 (NLDQLNQELV…QKINFDLLIS (61 aa)) is the v-SNARE coiled-coil homology domain. Ser160 is modified (phosphoserine). Residues 193–213 (QYAPIVIVAFFFVFLFWWIFL) traverse the membrane as a helical; Anchor for type IV membrane protein segment. Position 214 (Lys214) is a topological domain, vesicular.

Belongs to the synaptobrevin family. In terms of assembly, component of two distinct SNARE complexes consisting of SED5, BOS1, BET1 and SEC22 or UFE1, USE1, SEC20 and SEC22. YKT6 can probably replace SEC22 as subunit of either complex. Interacts with SEC24, YIF1 and YIP1.

The protein resides in the membrane. Its subcellular location is the endoplasmic reticulum membrane. The protein localises to the golgi apparatus membrane. Nonessential SNARE involved in targeting and fusion of ER-derived transport vesicles with the Golgi complex as well as Golgi-derived retrograde transport vesicles with the ER. The sequence is that of Protein transport protein SEC22 (SEC22) from Saccharomyces cerevisiae (strain ATCC 204508 / S288c) (Baker's yeast).